We begin with the raw amino-acid sequence, 722 residues long: Transcription factor kayak, isoforms D/sro (722 aa).

Over residues 173–188 the composition is skewed to low complexity; it reads QHQTQQQHQSQQQQQH. 3 disordered regions span residues 173–193, 283–317, and 350–407; these read QHQT…RQDY, LGQG…HTDS, and GSAS…KRRV. Positions 283–300 are enriched in polar residues; that stretch reads LGQGSESEDSNASYNDTQ. Composition is skewed to low complexity over residues 308–317 and 350–364; these read TDTSSAHTDS and GSAS…TSNT. The bZIP domain maps to 385-448; it reads EQKRAVRRER…NQLEYLLATH (64 aa). The basic motif stretch occupies residues 387–406; it reads KRAVRRERNKQAAARCRKRR. Positions 413–420 are leucine-zipper; sequence LTEEVEQL. Residues 477–498 show a composition bias toward low complexity; sequence AGSSGSGASSHHNHNSNDSSNG. 2 disordered regions span residues 477-519 and 683-722; these read AGSS…PLDL and DGGT…LVSL. Over residues 506–516 the composition is skewed to polar residues; it reads TLNSTGRSNSP. The residue at position 515 (S515) is a Phosphoserine.

This sequence belongs to the bZIP family. Fos subfamily. As to quaternary structure, homodimer. Heterodimer with Jra. The kay-Jra heterodimer binds more stably to the AP-1 site than either of the two proteins alone.

The protein resides in the nucleus. Functionally, developmentally regulated transcription factor AP-1 binds and recognizes the enhancer DNA sequence: 5'-TGA[CG]TCA-3'. May play a role in the function or determination of a particular subset of cells in the developing embryo. It is able to carry out its function either independently of or in conjunction with Jra. The protein is Transcription factor kayak, isoforms D/sro of Drosophila melanogaster (Fruit fly).